Consider the following 62-residue polypeptide: Large ribosomal subunit protein bL28 (62 aa).

It belongs to the bacterial ribosomal protein bL28 family.

This is Large ribosomal subunit protein bL28 from Staphylococcus epidermidis (strain ATCC 12228 / FDA PCI 1200).